Consider the following 880-residue polypeptide: Probable dipeptidyl-aminopeptidase B (880 aa).

Positions 1–26 (MPRQRAPKEEEAELLTKQERSARSSE) are enriched in basic and acidic residues. Residues 1 to 71 (MPRQRAPKEE…KYTDEDDEAQ (71 aa)) form a disordered region. Topologically, residues 1 to 93 (MPRQRAPKEE…PISVDKKTRR (93 aa)) are cytoplasmic. Residues 30–40 (DTSISSISTTS) show a composition bias toward low complexity. A helical; Signal-anchor for type II membrane protein transmembrane segment spans residues 94–114 (WLWIVGIACVTGWALALVFFL). Over 115-880 (MSGSYKHVST…AQVDARMERR (766 aa)) the chain is Vacuolar. The N-linked (GlcNAc...) asparagine glycan is linked to asparagine 533. Serine 724 serves as the catalytic Charge relay system. Residue asparagine 778 is glycosylated (N-linked (GlcNAc...) asparagine). Residues aspartate 801 and histidine 834 each act as charge relay system in the active site.

This sequence belongs to the peptidase S9B family.

It localises to the vacuole membrane. The catalysed reaction is Release of an N-terminal dipeptide, Xaa-Yaa-|-Zaa-, from a polypeptide, preferentially when Yaa is Pro, provided Zaa is neither Pro nor hydroxyproline.. Its function is as follows. Type IV dipeptidyl-peptidase which removes N-terminal dipeptides sequentially from polypeptides having unsubstituted N-termini provided that the penultimate residue is proline. The protein is Probable dipeptidyl-aminopeptidase B (dapB) of Pyrenophora tritici-repentis (strain Pt-1C-BFP) (Wheat tan spot fungus).